Here is a 237-residue protein sequence, read N- to C-terminus: Probable transcriptional regulatory protein NIS_0560 (237 aa).

This sequence belongs to the TACO1 family.

The protein localises to the cytoplasm. This is Probable transcriptional regulatory protein NIS_0560 from Nitratiruptor sp. (strain SB155-2).